The sequence spans 853 residues: DNA mismatch repair protein MutS (853 aa).

614–621 (GPNMGGKS) lines the ATP pocket.

Belongs to the DNA mismatch repair MutS family.

This protein is involved in the repair of mismatches in DNA. It is possible that it carries out the mismatch recognition step. This protein has a weak ATPase activity. The sequence is that of DNA mismatch repair protein MutS from Escherichia fergusonii (strain ATCC 35469 / DSM 13698 / CCUG 18766 / IAM 14443 / JCM 21226 / LMG 7866 / NBRC 102419 / NCTC 12128 / CDC 0568-73).